Consider the following 303-residue polypeptide: Porphobilinogen deaminase (303 aa).

Position 241 is an S-(dipyrrolylmethanemethyl)cysteine (C241).

It belongs to the HMBS family. Monomer. Requires dipyrromethane as cofactor.

The enzyme catalyses 4 porphobilinogen + H2O = hydroxymethylbilane + 4 NH4(+). It functions in the pathway porphyrin-containing compound metabolism; protoporphyrin-IX biosynthesis; coproporphyrinogen-III from 5-aminolevulinate: step 2/4. The protein operates within porphyrin-containing compound metabolism; chlorophyll biosynthesis. In terms of biological role, tetrapolymerization of the monopyrrole PBG into the hydroxymethylbilane pre-uroporphyrinogen in several discrete steps. The sequence is that of Porphobilinogen deaminase from Roseiflexus sp. (strain RS-1).